The sequence spans 72 residues: Small ribosomal subunit protein bS18 (72 aa).

This sequence belongs to the bacterial ribosomal protein bS18 family. In terms of assembly, part of the 30S ribosomal subunit. Forms a tight heterodimer with protein bS6.

Functionally, binds as a heterodimer with protein bS6 to the central domain of the 16S rRNA, where it helps stabilize the platform of the 30S subunit. The sequence is that of Small ribosomal subunit protein bS18 from Trichodesmium erythraeum (strain IMS101).